The primary structure comprises 465 residues: Kinesin-like protein KIN-1 (465 aa).

The Kinesin motor domain maps to 3–334 (NVTVCARFRP…LRFGMRAKHI (332 aa)). Position 87–94 (87–94 (GQTGAGKT)) interacts with ATP. The tract at residues 338-358 (PRASEVKSAKAQEEPSSVTKD) is disordered. The span at 341-358 (SEVKSAKAQEEPSSVTKD) shows a compositional bias: basic and acidic residues. Residues 402–444 (VYEDIVSKTIQSLQQAVDELQQKVKKLEAENIGIQEQALRNHE) are a coiled coil.

Belongs to the TRAFAC class myosin-kinesin ATPase superfamily. Kinesin family. KIN-1 subfamily. Homodimer. Interacts with WIP1 and WIP2. In terms of tissue distribution, specifically expressed in ovules and anthers.

Kinesin-like motor protein that promotes synapsis and is required for proper crossover distribution in meiosis. Plays a role in the nuclear division cycles during megagametogenesis. The protein is Kinesin-like protein KIN-1 of Arabidopsis thaliana (Mouse-ear cress).